The chain runs to 262 residues: Thiazole synthase (262 aa).

Lys97 serves as the catalytic Schiff-base intermediate with DXP. Residues Gly158, 185 to 186 (AG), and 207 to 208 (NT) contribute to the 1-deoxy-D-xylulose 5-phosphate site.

Belongs to the ThiG family. As to quaternary structure, homotetramer. Forms heterodimers with either ThiH or ThiS.

It localises to the cytoplasm. The catalysed reaction is [ThiS sulfur-carrier protein]-C-terminal-Gly-aminoethanethioate + 2-iminoacetate + 1-deoxy-D-xylulose 5-phosphate = [ThiS sulfur-carrier protein]-C-terminal Gly-Gly + 2-[(2R,5Z)-2-carboxy-4-methylthiazol-5(2H)-ylidene]ethyl phosphate + 2 H2O + H(+). The protein operates within cofactor biosynthesis; thiamine diphosphate biosynthesis. Functionally, catalyzes the rearrangement of 1-deoxy-D-xylulose 5-phosphate (DXP) to produce the thiazole phosphate moiety of thiamine. Sulfur is provided by the thiocarboxylate moiety of the carrier protein ThiS. In vitro, sulfur can be provided by H(2)S. This is Thiazole synthase from Neisseria gonorrhoeae (strain ATCC 700825 / FA 1090).